Reading from the N-terminus, the 383-residue chain is Anhydro-N-acetylmuramic acid kinase (383 aa).

Residue 9–16 (GTSLDGID) coordinates ATP.

It belongs to the anhydro-N-acetylmuramic acid kinase family.

It carries out the reaction 1,6-anhydro-N-acetyl-beta-muramate + ATP + H2O = N-acetyl-D-muramate 6-phosphate + ADP + H(+). Its pathway is amino-sugar metabolism; 1,6-anhydro-N-acetylmuramate degradation. It functions in the pathway cell wall biogenesis; peptidoglycan recycling. Its function is as follows. Catalyzes the specific phosphorylation of 1,6-anhydro-N-acetylmuramic acid (anhMurNAc) with the simultaneous cleavage of the 1,6-anhydro ring, generating MurNAc-6-P. Is required for the utilization of anhMurNAc either imported from the medium or derived from its own cell wall murein, and thus plays a role in cell wall recycling. The protein is Anhydro-N-acetylmuramic acid kinase of Clostridioides difficile (strain 630) (Peptoclostridium difficile).